Consider the following 108-residue polypeptide: Protein SMALL AUXIN UP-REGULATED RNA 51 (108 aa).

Belongs to the ARG7 family. As to expression, expressed in organ primordia. Hardly observed in leaves.

The protein localises to the cell membrane. Provide a mechanistic link between auxin and plasma membrane H(+)-ATPases (PM H(+)-ATPases, e.g. AHA1 and AHA2), and triggers PM H(+)-ATPases activity by promoting phosphorylation of their C-terminal autoinhibitory domain as a result of PP2C-D subfamily of type 2C phosphatases inhibition, thus leading to the acidification of the apoplast and the facilitation of solutes and water uptake to drive cell expansion. Triggers plant growth probably by promoting cell elongation. Regulates branch angles and bending. The protein is Protein SMALL AUXIN UP-REGULATED RNA 51 of Arabidopsis thaliana (Mouse-ear cress).